Reading from the N-terminus, the 341-residue chain is UPF0283 membrane protein VV2076 (341 aa).

4 helical membrane-spanning segments follow: residues 64 to 84, 93 to 113, 207 to 227, and 255 to 275; these read LAGG…VDSV, WLTL…LGAM, ESAA…LVAW, and LVLA…AGMD.

This sequence belongs to the UPF0283 family.

It is found in the cell inner membrane. This is UPF0283 membrane protein VV2076 from Vibrio vulnificus (strain YJ016).